A 475-amino-acid polypeptide reads, in one-letter code: Ribulose bisphosphate carboxylase large chain (475 aa).

A propeptide spanning residues 1-2 (MS) is cleaved from the precursor. Proline 3 bears the N-acetylproline mark. At lysine 14 the chain carries N6,N6,N6-trimethyllysine. Positions 123 and 173 each coordinate substrate. The Proton acceptor role is filled by lysine 175. Substrate is bound at residue lysine 177. Residues lysine 201, aspartate 203, and glutamate 204 each contribute to the Mg(2+) site. Lysine 201 is subject to N6-carboxylysine. Histidine 294 serves as the catalytic Proton acceptor. Substrate-binding residues include arginine 295, histidine 327, and serine 379.

It belongs to the RuBisCO large chain family. Type I subfamily. As to quaternary structure, heterohexadecamer of 8 large chains and 8 small chains; disulfide-linked. The disulfide link is formed within the large subunit homodimers. Requires Mg(2+) as cofactor. Post-translationally, the disulfide bond which can form in the large chain dimeric partners within the hexadecamer appears to be associated with oxidative stress and protein turnover.

The protein resides in the plastid. The protein localises to the chloroplast. It catalyses the reaction 2 (2R)-3-phosphoglycerate + 2 H(+) = D-ribulose 1,5-bisphosphate + CO2 + H2O. It carries out the reaction D-ribulose 1,5-bisphosphate + O2 = 2-phosphoglycolate + (2R)-3-phosphoglycerate + 2 H(+). RuBisCO catalyzes two reactions: the carboxylation of D-ribulose 1,5-bisphosphate, the primary event in carbon dioxide fixation, as well as the oxidative fragmentation of the pentose substrate in the photorespiration process. Both reactions occur simultaneously and in competition at the same active site. The protein is Ribulose bisphosphate carboxylase large chain of Bouvardia ternifolia (Firecrackerbush).